The primary structure comprises 76 residues: Translational regulator CsrA (76 aa).

It belongs to the CsrA/RsmA family. In terms of assembly, homodimer; the beta-strands of each monomer intercalate to form a hydrophobic core, while the alpha-helices form wings that extend away from the core.

The protein localises to the cytoplasm. In terms of biological role, a translational regulator that binds mRNA to regulate translation initiation and/or mRNA stability. Usually binds in the 5'-UTR at or near the Shine-Dalgarno sequence preventing ribosome-binding, thus repressing translation. Its main target seems to be the major flagellin gene, while its function is anatagonized by FliW. The protein is Translational regulator CsrA of Wolinella succinogenes (strain ATCC 29543 / DSM 1740 / CCUG 13145 / JCM 31913 / LMG 7466 / NCTC 11488 / FDC 602W) (Vibrio succinogenes).